Here is a 471-residue protein sequence, read N- to C-terminus: Secretogranin-3 (471 aa).

The first 22 residues, 1–22, serve as a signal peptide directing secretion; it reads MGFLWTGSWILVLVLNSGPIQA. Disordered stretches follow at residues 24–73, 92–145, 208–231, and 345–405; these read PKPE…SNFS, KAKQ…HQLD, ANNY…KIPE, and KLEK…DEAK. The segment covering 28–45 has biased composition (basic and acidic residues); sequence GSQDKSLHNRELSAERPL. Phosphoserine is present on S40. O-linked (Xyl...) (chondroitin sulfate) serine glycosylation is present at S40. Residues 62 to 73 are compositionally biased toward low complexity; sequence PSESKPSESNFS. Basic and acidic residues-rich tracts occupy residues 106–142, 214–231, 345–355, and 363–405; these read LNVD…DGLH, APEK…KIPE, KLEKNTTDSKS, and EKSH…DEAK. S365 carries the phosphoserine modification.

In terms of assembly, interacts with CHGA. Interacts with secretogranin II/SCG2. Interacts (via C-terminus) with CPE. Expression restricted to the brain and pituitary gland. Not detected in the adrenal gland.

The protein resides in the cytoplasmic vesicle. It is found in the secretory vesicle. The protein localises to the secretory vesicle membrane. It localises to the secreted. Functionally, member of the granin protein family that regulates the biogenesis of secretory granules. Acts as a sorting receptor for intragranular proteins including chromogranin A/CHGA. May also play a role in angiogenesis. Promotes endothelial proliferation, migration and tube formation through MEK/ERK signaling pathway. This is Secretogranin-3 (Scg3) from Rattus norvegicus (Rat).